Consider the following 207-residue polypeptide: Peptidyl-tRNA hydrolase (207 aa).

Tyrosine 14 provides a ligand contact to tRNA. Catalysis depends on histidine 19, which acts as the Proton acceptor. Residues tyrosine 64, asparagine 66, and asparagine 112 each contribute to the tRNA site.

It belongs to the PTH family. In terms of assembly, monomer.

The protein resides in the cytoplasm. It carries out the reaction an N-acyl-L-alpha-aminoacyl-tRNA + H2O = an N-acyl-L-amino acid + a tRNA + H(+). Functionally, hydrolyzes ribosome-free peptidyl-tRNAs (with 1 or more amino acids incorporated), which drop off the ribosome during protein synthesis, or as a result of ribosome stalling. In terms of biological role, catalyzes the release of premature peptidyl moieties from peptidyl-tRNA molecules trapped in stalled 50S ribosomal subunits, and thus maintains levels of free tRNAs and 50S ribosomes. The polypeptide is Peptidyl-tRNA hydrolase (Rhodopseudomonas palustris (strain HaA2)).